The chain runs to 437 residues: Phosphomethylpyrimidine synthase (437 aa).

Residues asparagine 69, methionine 98, tyrosine 127, histidine 163, 185-187, 226-229, and glutamate 265 contribute to the substrate site; these read SRG and DACR. Histidine 269 lines the Zn(2+) pocket. Residue tyrosine 292 coordinates substrate. Histidine 333 contributes to the Zn(2+) binding site. The [4Fe-4S] cluster site is built by cysteine 409, cysteine 412, and cysteine 416.

It belongs to the ThiC family. It depends on [4Fe-4S] cluster as a cofactor.

It catalyses the reaction 5-amino-1-(5-phospho-beta-D-ribosyl)imidazole + S-adenosyl-L-methionine = 4-amino-2-methyl-5-(phosphooxymethyl)pyrimidine + CO + 5'-deoxyadenosine + formate + L-methionine + 3 H(+). It functions in the pathway cofactor biosynthesis; thiamine diphosphate biosynthesis. In terms of biological role, catalyzes the synthesis of the hydroxymethylpyrimidine phosphate (HMP-P) moiety of thiamine from aminoimidazole ribotide (AIR) in a radical S-adenosyl-L-methionine (SAM)-dependent reaction. This is Phosphomethylpyrimidine synthase from Clostridium kluyveri (strain NBRC 12016).